We begin with the raw amino-acid sequence, 122 residues long: Large ribosomal subunit protein uL18 (122 aa).

Belongs to the universal ribosomal protein uL18 family. Part of the 50S ribosomal subunit; part of the 5S rRNA/L5/L18/L25 subcomplex. Contacts the 5S and 23S rRNAs.

This is one of the proteins that bind and probably mediate the attachment of the 5S RNA into the large ribosomal subunit, where it forms part of the central protuberance. This chain is Large ribosomal subunit protein uL18, found in Desulforapulum autotrophicum (strain ATCC 43914 / DSM 3382 / VKM B-1955 / HRM2) (Desulfobacterium autotrophicum).